Here is a 90-residue protein sequence, read N- to C-terminus: DNA-directed RNA polymerase subunit Rpo5 (90 aa).

It belongs to the archaeal Rpo5/eukaryotic RPB5 RNA polymerase subunit family. In terms of assembly, part of the RNA polymerase complex.

It is found in the cytoplasm. It catalyses the reaction RNA(n) + a ribonucleoside 5'-triphosphate = RNA(n+1) + diphosphate. DNA-dependent RNA polymerase (RNAP) catalyzes the transcription of DNA into RNA using the four ribonucleoside triphosphates as substrates. This chain is DNA-directed RNA polymerase subunit Rpo5, found in Aeropyrum pernix (strain ATCC 700893 / DSM 11879 / JCM 9820 / NBRC 100138 / K1).